The sequence spans 556 residues: Solute carrier family 22 member 1 (556 aa).

Topologically, residues 1–21 (MPTVDDVLEQVGEFGWFQKQA) are cytoplasmic. A helical transmembrane segment spans residues 22-42 (FLLLCLISASLAPIYVGIVFL). The Extracellular portion of the chain corresponds to 43–150 (GFTPGHYCQN…LVCGDAWKVD (108 aa)). A glycan (N-linked (GlcNAc...) asparagine) is linked at Asn-71. A helical transmembrane segment spans residues 151 to 171 (LFQSCVNLGFFLGSLVVGYIA). Residues 172–177 (DRFGRK) lie on the Cytoplasmic side of the membrane. A helical transmembrane segment spans residues 178–198 (LCLLVTTLVTSVSGVLTAVAP). The Extracellular portion of the chain corresponds to 199-211 (DYTSMLLFRLLQG). A helical transmembrane segment spans residues 212–231 (MVSKGSWVSGYTLITEFVGS). The Cytoplasmic segment spans residues 232-238 (GYRRTTA). A helical membrane pass occupies residues 239-259 (ILYQMAFTVGLVGLAGVAYAI). At 260 to 263 (PDWR) the chain is on the extracellular side. A helical transmembrane segment spans residues 264–284 (WLQLAVSLPTFLFLLYYWFVP). The Proline-rich sequence signature appears at 284 to 288 (PESPR). Topologically, residues 285 to 348 (ESPRWLLSQK…FRTPNLRKHT (64 aa)) are cytoplasmic. A Phosphoserine modification is found at Ser-334. Residues 349-369 (VILMYLWFSCAVLYQGLIMHV) traverse the membrane as a helical segment. Residues 370–377 (GATGANLY) lie on the Extracellular side of the membrane. A helical membrane pass occupies residues 378-398 (LDFFYSSLVEFPAAFIILVTI). At 399-403 (DRIGR) the chain is on the cytoplasmic side. The chain crosses the membrane as a helical span at residues 404–424 (IYPIAASNLVTGAACLLMIFI). Over 425 to 429 (PHELH) the chain is Extracellular. The helical transmembrane segment at 430–452 (WLNVTLACLGRMGATIVLQMVCL) threads the bilayer. Over 453–465 (VNAELYPTFIRNL) the chain is Cytoplasmic. The chain crosses the membrane as a helical span at residues 466 to 486 (GMMVCSALCDLGGIFTPFMVF). The Extracellular portion of the chain corresponds to 487-493 (RLMEVWQ). Residues 494-514 (ALPLILFGVLGLTAGAMTLLL) traverse the membrane as a helical segment. The Cytoplasmic segment spans residues 515–556 (PETKGVALPETIEEAENLGRRKSKAKENTIYLQVQTGKSSST). Thr-543 carries the post-translational modification Phosphothreonine.

Belongs to the major facilitator (TC 2.A.1) superfamily. Organic cation transporter (TC 2.A.1.19) family. Phosphorylated. Expressed in kidney cortex in S1, S2 segments of renal proximal tubules as well as in kidney medulla. Expressed throughout the liver lobuli, in hepatocytes surrounding the central veins. Expressed in enterocytes of villi and crypts in small intestine. Expressed in brain, in some white matter regions like the corpus callosum and in the granular layer of the cerebellum. Expressed in Sertoli cells in testis. Expressed in colon. Expressed in tracheal and bronchial ciliated epithelium in the respiratory tract. Expressed in spleen, moderately in skin, and weakly in the gastrointestinal tract, lung, thymus, muscle, and prostate. As to expression, expressed in kidney cortex and medulla. Expressed in intestine, liver and colon.

It is found in the basolateral cell membrane. The protein resides in the apical cell membrane. The protein localises to the lateral cell membrane. It localises to the basal cell membrane. Its subcellular location is the cell membrane. The catalysed reaction is 1-methylnicotinamide(out) = 1-methylnicotinamide(in). It catalyses the reaction dopamine(out) = dopamine(in). The enzyme catalyses serotonin(out) = serotonin(in). It carries out the reaction (R)-adrenaline(out) = (R)-adrenaline(in). The catalysed reaction is (R)-noradrenaline(out) = (R)-noradrenaline(in). It catalyses the reaction histamine(out) = histamine(in). The enzyme catalyses guanidine(out) = guanidine(in). It carries out the reaction choline(out) = choline(in). The catalysed reaction is acetylcholine(in) = acetylcholine(out). It catalyses the reaction thiamine(in) = thiamine(out). The enzyme catalyses agmatine(out) = agmatine(in). It carries out the reaction putrescine(out) = putrescine(in). The catalysed reaction is spermidine(in) = spermidine(out). It catalyses the reaction (R)-carnitine(in) = (R)-carnitine(out). The enzyme catalyses O-isobutanoyl-(R)-carnitine(in) = O-isobutanoyl-(R)-carnitine(out). It carries out the reaction O-acetyl-(R)-carnitine(in) = O-acetyl-(R)-carnitine(out). The catalysed reaction is O-3-hydroxybutanoyl-(R)-carnitine(in) = O-3-hydroxybutanoyl-(R)-carnitine(out). It catalyses the reaction O-propanoyl-(R)-carnitine(in) = O-propanoyl-(R)-carnitine(out). The enzyme catalyses O-butanoyl-(R)-carnitine(in) = O-butanoyl-(R)-carnitine(out). It carries out the reaction O-2-methylbutanoyl-(R)-carnitine(in) = O-2-methylbutanoyl-(R)-carnitine(out). The catalysed reaction is O-3-methylbutanoyl-(R)-carnitine(in) = O-3-methylbutanoyl-(R)-carnitine(out). It catalyses the reaction O-hexanoyl-(R)-carnitine(in) = O-hexanoyl-(R)-carnitine(out). The enzyme catalyses L-histidyl-L-proline diketopiperazine(in) = L-histidyl-L-proline diketopiperazine(out). It carries out the reaction (R)-salsolinol(in) = (R)-salsolinol(out). The catalysed reaction is prostaglandin F2alpha(out) = prostaglandin F2alpha(in). It catalyses the reaction prostaglandin E2(out) = prostaglandin E2(in). With respect to regulation, phosphorylation of the transporter leads to changes in its substrate affinity, resulting in a regulation of the transport activity. In contrast with human ortholog, ASP uptake is stimulated by protein kinase A (PKA) and C (PKC) and endogenous tyrosine kinase activation. ASP affinity is induced by PKC-dependent phosphorylation. Inhibited by cGMP, most likely through a cGMP-binding protein that interacts with OCT1. Functionally, electrogenic voltage-dependent transporter that mediates the transport of a variety of organic cations such as endogenous bioactive amines, cationic drugs and xenobiotics. Functions as a pH- and Na(+)-independent, bidirectional transporter. Cation cellular uptake or release is driven by the electrochemical potential (i.e. membrane potential and concentration gradient) and substrate selectivity. Hydrophobicity is a major requirement for recognition in polyvalent substrates and inhibitors. Primarily expressed in the basolateral membrane of hepatocytes and proximal tubules and involved in the uptake and disposition of cationic compounds from the blood by hepatic and renal clearance. Most likely functions as an uptake carrier in enterocytes contributing to the intestinal excretion and elimination of organic cations from the systemic circulation. Transports endogenous monoamines such as N-1-methylnicotinamide (NMN), guanidine, neurotransmitters dopamine, serotonin, noradrenaline, adrenaline and histamine, and quaternary ammonium compound such as choline. Also transports natural polyamines such as spermidine, agmatine and putrescine at low affinity, but relatively high turnover. Involved in the hepatic uptake of vitamin B1/thiamine, hence regulating hepatic lipid and energy metabolism. Contributes to the influx and efflux of fatty acid carriers carnitines and acylcarnitines across the basolateral membrane of hepatocytes, from the liver to the systemic circulation and inversely and may be involved in regulating the systemic availability of hepatic acylcarnitines. Mediates the bidirectional transport of acetylcholine (ACh) at the apical membrane of ciliated cell in airway epithelium, thereby playing a role in luminal release of ACh from bronchial epithelium. Transports dopaminergic neuromodulators cyclo(his-pro) and salsolinol with lower efficency. Also capable of transporting non-amine endogenous compounds such as prostaglandin E2 (PGE2) and prostaglandin F2-alpha (PGF2-alpha). May contribute to the transport of cationic compounds in testis across the blood-testis-barrier. Also mediates the uptake of xenobiotics tributylmethylammonium (TBuMA), quinidine, N-methyl-quinine (NMQ), N-methyl-quinidine (NMQD) N-(4,4-azo-n-pentyl)-quinuclidine (APQ), azidoprocainamide methoiodide (AMP), N-(4,4-azo-n-pentyl)-21-deoxyajmalinium (APDA) and 4-(4-(dimethylamino)styryl)-N-methylpyridinium (ASP). Functional isoform capable of transporting TEA. The protein is Solute carrier family 22 member 1 of Rattus norvegicus (Rat).